A 330-amino-acid chain; its full sequence is 7,8-didemethyl-8-hydroxy-5-deazariboflavin synthase (330 aa).

In terms of domain architecture, Radical SAM core spans 5–245 (VTFSRNVFIP…SDVAVQVAPN (241 aa)). [4Fe-4S] cluster is bound by residues cysteine 19, cysteine 23, and cysteine 26.

The protein belongs to the radical SAM superfamily. CofG family. In terms of assembly, consists of two subunits, CofG and CofH. [4Fe-4S] cluster is required as a cofactor.

It catalyses the reaction 5-amino-5-(4-hydroxybenzyl)-6-(D-ribitylimino)-5,6-dihydrouracil + S-adenosyl-L-methionine = 7,8-didemethyl-8-hydroxy-5-deazariboflavin + 5'-deoxyadenosine + L-methionine + NH4(+) + H(+). The protein operates within cofactor biosynthesis; coenzyme F0 biosynthesis. Catalyzes the radical-mediated synthesis of 7,8-didemethyl-8-hydroxy-5-deazariboflavin from 5-amino-5-(4-hydroxybenzyl)-6-(D-ribitylimino)-5,6-dihydrouracil. This chain is 7,8-didemethyl-8-hydroxy-5-deazariboflavin synthase, found in Methanococcoides burtonii (strain DSM 6242 / NBRC 107633 / OCM 468 / ACE-M).